Reading from the N-terminus, the 616-residue chain is D-glutamate cyclase, mitochondrial (616 aa).

The transit peptide at 1–28 (MPFTLHLRSRLPSAIRSLILQKKPNIRN) directs the protein to the mitochondrion.

This sequence belongs to the D-glutamate cyclase family.

Its subcellular location is the mitochondrion matrix. The enzyme catalyses D-glutamate = 5-oxo-D-proline + H2O. In terms of biological role, D-glutamate cyclase that converts D-glutamate to 5-oxo-D-proline. This chain is D-glutamate cyclase, mitochondrial, found in Homo sapiens (Human).